Reading from the N-terminus, the 329-residue chain is Glycerol-3-phosphate dehydrogenase [NAD(P)+] (329 aa).

NADPH is bound by residues tryptophan 11, arginine 30, and lysine 103. Positions 103, 132, and 134 each coordinate sn-glycerol 3-phosphate. Alanine 136 lines the NADPH pocket. Residues lysine 187, aspartate 240, serine 250, arginine 251, and asparagine 252 each contribute to the sn-glycerol 3-phosphate site. Residue lysine 187 is the Proton acceptor of the active site. An NADPH-binding site is contributed by arginine 251. The NADPH site is built by valine 275 and glutamate 277.

This sequence belongs to the NAD-dependent glycerol-3-phosphate dehydrogenase family.

The protein resides in the cytoplasm. The enzyme catalyses sn-glycerol 3-phosphate + NAD(+) = dihydroxyacetone phosphate + NADH + H(+). It carries out the reaction sn-glycerol 3-phosphate + NADP(+) = dihydroxyacetone phosphate + NADPH + H(+). It functions in the pathway membrane lipid metabolism; glycerophospholipid metabolism. In terms of biological role, catalyzes the reduction of the glycolytic intermediate dihydroxyacetone phosphate (DHAP) to sn-glycerol 3-phosphate (G3P), the key precursor for phospholipid synthesis. This is Glycerol-3-phosphate dehydrogenase [NAD(P)+] from Nitrosomonas europaea (strain ATCC 19718 / CIP 103999 / KCTC 2705 / NBRC 14298).